Consider the following 271-residue polypeptide: Extracellular metalloprotease TRV_06892 (271 aa).

The N-terminal stretch at 1–19 is a signal peptide; sequence MRFSVLLTGLAAAGSIATA. Asn-136 carries N-linked (GlcNAc...) asparagine glycosylation. Residue His-185 coordinates Zn(2+). Residue Glu-186 is part of the active site. Zn(2+) is bound at residue His-189. Asn-200 carries N-linked (GlcNAc...) asparagine glycosylation. A disulfide bond links Cys-222 and Cys-248.

It belongs to the peptidase M43B family.

The protein localises to the secreted. Secreted metalloproteinase that allows assimilation of proteinaceous substrates. Plays a pivotal role as a pathogenicity determinant during infections and contributes to the ability of the pathogen to persist within the mammalian host. The polypeptide is Extracellular metalloprotease TRV_06892 (Trichophyton verrucosum (strain HKI 0517)).